Here is a 595-residue protein sequence, read N- to C-terminus: Arginine--tRNA ligase (595 aa).

Positions 132-142 (ANPTGPLHVGH) match the 'HIGH' region motif.

It belongs to the class-I aminoacyl-tRNA synthetase family. Monomer.

Its subcellular location is the cytoplasm. It carries out the reaction tRNA(Arg) + L-arginine + ATP = L-arginyl-tRNA(Arg) + AMP + diphosphate. The chain is Arginine--tRNA ligase from Cupriavidus necator (strain ATCC 17699 / DSM 428 / KCTC 22496 / NCIMB 10442 / H16 / Stanier 337) (Ralstonia eutropha).